The chain runs to 336 residues: Protein-glutamate methylesterase/protein-glutamine glutaminase 1 (336 aa).

One can recognise a Response regulatory domain in the interval 2 to 119 (KIAIVNDMPM…GNAQEAAAPL (118 aa)). At D53 the chain carries 4-aspartylphosphate. The region spanning 143 to 336 (PLRSGAPRQS…APRLLEIFAK (194 aa)) is the CheB-type methylesterase domain. Active-site residues include S159, H186, and D279.

The protein belongs to the CheB family. Phosphorylated by CheA. Phosphorylation of the N-terminal regulatory domain activates the methylesterase activity.

Its subcellular location is the cytoplasm. It catalyses the reaction [protein]-L-glutamate 5-O-methyl ester + H2O = L-glutamyl-[protein] + methanol + H(+). The catalysed reaction is L-glutaminyl-[protein] + H2O = L-glutamyl-[protein] + NH4(+). Involved in chemotaxis. Part of a chemotaxis signal transduction system that modulates chemotaxis in response to various stimuli. Catalyzes the demethylation of specific methylglutamate residues introduced into the chemoreceptors (methyl-accepting chemotaxis proteins or MCP) by CheR. Also mediates the irreversible deamidation of specific glutamine residues to glutamic acid. The sequence is that of Protein-glutamate methylesterase/protein-glutamine glutaminase 1 from Pseudomonas fluorescens (strain ATCC BAA-477 / NRRL B-23932 / Pf-5).